The chain runs to 366 residues: tRNA-specific 2-thiouridylase MnmA (366 aa).

Residues 6-13 (GLSGGVDS) and Met-32 each bind ATP. The Nucleophile role is filled by Cys-96. Cysteines 96 and 196 form a disulfide. Residue Gly-120 participates in ATP binding. Residues 146–148 (KDQ) form an interaction with tRNA region. Catalysis depends on Cys-196, which acts as the Cysteine persulfide intermediate. The interaction with tRNA stretch occupies residues 302–303 (RY).

Belongs to the MnmA/TRMU family.

The protein resides in the cytoplasm. It catalyses the reaction S-sulfanyl-L-cysteinyl-[protein] + uridine(34) in tRNA + AH2 + ATP = 2-thiouridine(34) in tRNA + L-cysteinyl-[protein] + A + AMP + diphosphate + H(+). In terms of biological role, catalyzes the 2-thiolation of uridine at the wobble position (U34) of tRNA, leading to the formation of s(2)U34. The polypeptide is tRNA-specific 2-thiouridylase MnmA (Treponema denticola (strain ATCC 35405 / DSM 14222 / CIP 103919 / JCM 8153 / KCTC 15104)).